The following is a 743-amino-acid chain: Catalase-peroxidase (743 aa).

The disordered stretch occupies residues 1 to 21 (MSENHETVVSELNEESGGGCP). Positions 108 to 231 (WHSAGTYRIS…LGAVQMGLIY (124 aa)) form a cross-link, tryptophyl-tyrosyl-methioninium (Trp-Tyr) (with M-257). His109 (proton acceptor) is an active-site residue. The tryptophyl-tyrosyl-methioninium (Tyr-Met) (with W-108) cross-link spans 231 to 257 (YVNPEGPNGTPDPLAAARDIRETFRRM). Residue His272 participates in heme b binding. The interval 275-296 (GKTHGAGDPDNVGPEPEGAPLE) is disordered.

Belongs to the peroxidase family. Peroxidase/catalase subfamily. Homodimer or homotetramer. Requires heme b as cofactor. In terms of processing, formation of the three residue Trp-Tyr-Met cross-link is important for the catalase, but not the peroxidase activity of the enzyme.

It catalyses the reaction H2O2 + AH2 = A + 2 H2O. The catalysed reaction is 2 H2O2 = O2 + 2 H2O. In terms of biological role, bifunctional enzyme with both catalase and broad-spectrum peroxidase activity. This is Catalase-peroxidase from Parafrankia sp. (strain EAN1pec).